The chain runs to 464 residues: Trigger factor (464 aa).

Residues 166-245 (GDFLTIDITA…VKAVKERELP (80 aa)) enclose the PPIase FKBP-type domain. The interval 426–464 (FVRPGGEEEAPAAEVTEADTAEGEATEVPAEDEKAEAKA) is disordered. Acidic residues predominate over residues 432–455 (EEEAPAAEVTEADTAEGEATEVPA).

Belongs to the FKBP-type PPIase family. Tig subfamily.

Its subcellular location is the cytoplasm. It carries out the reaction [protein]-peptidylproline (omega=180) = [protein]-peptidylproline (omega=0). Involved in protein export. Acts as a chaperone by maintaining the newly synthesized protein in an open conformation. Functions as a peptidyl-prolyl cis-trans isomerase. The sequence is that of Trigger factor from Pseudarthrobacter chlorophenolicus (strain ATCC 700700 / DSM 12829 / CIP 107037 / JCM 12360 / KCTC 9906 / NCIMB 13794 / A6) (Arthrobacter chlorophenolicus).